Here is a 602-residue protein sequence, read N- to C-terminus: NAD-dependent protein deacetylase sir-2.1 (602 aa).

The disordered stretch occupies residues 25 to 57 (PEIETMHIENSVEGESGRQRTESTASVNSESWQ). The segment covering 46 to 57 (ESTASVNSESWQ) has biased composition (polar residues). Residues 119 to 374 (KLFTYNSLSD…RDICYALGGS (256 aa)) form the Deacetylase sirtuin-type domain. NAD(+)-binding positions include 144-163 (GAGV…DGIY) and 228-231 (QNID). Residue H246 is the Proton acceptor of the active site. C254, C257, C278, and C281 together coordinate Zn(2+). NAD(+) contacts are provided by residues 318–320 (GSS), 343–345 (NRE), and C360. Disordered regions lie at residues 411–468 (QERR…SDEV) and 520–551 (RNRH…RSQS).

The protein belongs to the sirtuin family. Class I subfamily. As to quaternary structure, interacts with ftt-2 and par-5. Interacts with daf-16 following heat-shock, which causes daf-16 to accumulate in the nucleus. Interaction with daf-16 is promoted by ftt-2. The cofactor is Zn(2+).

The protein resides in the nucleus. It catalyses the reaction N(6)-acetyl-L-lysyl-[protein] + NAD(+) + H2O = 2''-O-acetyl-ADP-D-ribose + nicotinamide + L-lysyl-[protein]. Functionally, NAD-dependent deacetylase. Required for a reduction of the 'Lys-16' acetylation of histone H4 (H4K16ac) on dosage-compensated X chromosomes in hermaphrodites. Functions upstream of daf-16 in the insulin-like signaling pathway, promoting daf-16 mediated transcriptional activation and increased life-span. May also regulate life-span independently of daf-16 by modulating the transcription of genes involved in the stress response of the endoplasmic reticulum (ER). Acts upstream of the nicotinic acid metabolism pathway, which may be linked to the regulation of longevity. Plays a role in ascaroside-mediated longevity and stress resistance. The protein is NAD-dependent protein deacetylase sir-2.1 (sir-2.1) of Caenorhabditis briggsae.